The primary structure comprises 294 residues: Elongation factor Ts, mitochondrial 2 (294 aa).

It belongs to the EF-Ts family.

It localises to the mitochondrion. Associates with the EF-Tu.GDP complex and induces the exchange of GDP to GTP. It remains bound to the aminoacyl-tRNA.EF-Tu.GTP complex up to the GTP hydrolysis stage on the ribosome. In Paramecium tetraurelia, this protein is Elongation factor Ts, mitochondrial 2.